Here is a 341-residue protein sequence, read N- to C-terminus: Dye-decolorizing peroxidase (341 aa).

Asp148 serves as the catalytic Proton acceptor. His221 contributes to the heme binding site. The interval 304–341 (FLDDPPDAPTRLVPEATFTAPISDGSLGIGSLKRSAQQ) is targeting peptide.

The protein belongs to the DyP-type peroxidase family. In terms of assembly, homohexamer. Heme b serves as cofactor.

It is found in the encapsulin nanocompartment. Cargo protein of a type 1 encapsulin nanocompartment. Has both general peroxidase activity and dye-decolorizing activity. Can catalyze the oxidation of both protoporphyrinogen IX and coproporphyrinogen III to their corresponding porphyrins. Also efficiently decolorizes the dyes alizarin red and Cibacron blue F3GA. This cargo-loaded encapsulin nanocompartment is probably involved in protection against oxidative damage. The chain is Dye-decolorizing peroxidase from Rhodococcus erythropolis (strain PR4 / NBRC 100887).